Here is a 156-residue protein sequence, read N- to C-terminus: Glycine cleavage system H protein 2, mitochondrial (156 aa).

Residues 1 to 23 constitute a mitochondrion transit peptide; the sequence is MACRLFWASRVASHLRISVAQRG. In terms of domain architecture, Lipoyl-binding spans 47–129; the sequence is KATFGITDHA…YEQGWIIKVE (83 aa). Position 88 is an N6-lipoyllysine (K88). Position 131 is a phosphoserine (S131).

This sequence belongs to the GcvH family. As to quaternary structure, the glycine cleavage system is composed of four proteins: P, T, L and H. It depends on (R)-lipoate as a cofactor.

It is found in the mitochondrion. In terms of biological role, the glycine decarboxylase (GDC) or glycine cleavage system catalyzes the degradation of glycine. The H protein shuttles the methylamine group of glycine from the P protein to the T protein. The protein is Glycine cleavage system H protein 2, mitochondrial (GDH2) of Arabidopsis thaliana (Mouse-ear cress).